Consider the following 221-residue polypeptide: Adenylate kinase (221 aa).

Residue 10–15 (GAGKGT) coordinates ATP. The NMP stretch occupies residues 30 to 59 (STGDIFRQNLRDNTELGKLAKEYMDKGLLV). Residues Thr31, Arg36, 57–59 (LLV), 85–88 (GYPR), and Gln92 each bind AMP. The tract at residues 126–163 (GRRVCPVCGATYHIKTSPPKVDNVCDKCGSELIQRSDD) is LID. An ATP-binding site is contributed by Arg127. Zn(2+) is bound by residues Cys130 and Cys133. 136–137 (TY) contacts ATP. Residues Cys150 and Cys153 each contribute to the Zn(2+) site. AMP contacts are provided by Arg160 and Arg171. Lys199 serves as a coordination point for ATP.

Belongs to the adenylate kinase family. In terms of assembly, monomer.

It is found in the cytoplasm. It carries out the reaction AMP + ATP = 2 ADP. It participates in purine metabolism; AMP biosynthesis via salvage pathway; AMP from ADP: step 1/1. Functionally, catalyzes the reversible transfer of the terminal phosphate group between ATP and AMP. Plays an important role in cellular energy homeostasis and in adenine nucleotide metabolism. The polypeptide is Adenylate kinase (Caldanaerobacter subterraneus subsp. tengcongensis (strain DSM 15242 / JCM 11007 / NBRC 100824 / MB4) (Thermoanaerobacter tengcongensis)).